A 604-amino-acid chain; its full sequence is Elongation factor 4 (604 aa).

One can recognise a tr-type G domain in the interval 7–189 (SRIRNFSIIA…SIVHLVPPPD (183 aa)). GTP-binding positions include 19 to 24 (DHGKST) and 136 to 139 (NKID).

The protein belongs to the TRAFAC class translation factor GTPase superfamily. Classic translation factor GTPase family. LepA subfamily.

It localises to the cell inner membrane. It catalyses the reaction GTP + H2O = GDP + phosphate + H(+). Functionally, required for accurate and efficient protein synthesis under certain stress conditions. May act as a fidelity factor of the translation reaction, by catalyzing a one-codon backward translocation of tRNAs on improperly translocated ribosomes. Back-translocation proceeds from a post-translocation (POST) complex to a pre-translocation (PRE) complex, thus giving elongation factor G a second chance to translocate the tRNAs correctly. Binds to ribosomes in a GTP-dependent manner. The chain is Elongation factor 4 from Gloeothece citriformis (strain PCC 7424) (Cyanothece sp. (strain PCC 7424)).